The sequence spans 161 residues: Allophycocyanin alpha subunit (161 aa).

C81 contributes to the (2R,3E)-phycocyanobilin binding site.

The protein belongs to the phycobiliprotein family. Heterodimer of an alpha and a beta chain. Contains one covalently linked phycocyanobilin chromophore. The chromophore on position 81 is added by the phycocyanobilin lyase CpcUS.

The protein resides in the cellular thylakoid membrane. Its function is as follows. Light-harvesting photosynthetic bile pigment-protein from the phycobiliprotein complex. Allophycocyanin has a maximum absorption at approximately 650 nanometers. In Picosynechococcus sp. (strain ATCC 27264 / PCC 7002 / PR-6) (Agmenellum quadruplicatum), this protein is Allophycocyanin alpha subunit (apcA).